The following is a 206-amino-acid chain: Urease accessory protein UreE (206 aa).

A disordered region spans residues 136 to 206 (PEGGAYAEPS…HGHAHAHDRK (71 aa)). Basic and acidic residues-rich tracts occupy residues 148–169 (QGHD…GGHE) and 177–191 (HGHA…EHCG). Basic residues predominate over residues 192 to 206 (HGHHHHGHAHAHDRK).

This sequence belongs to the UreE family.

The protein resides in the cytoplasm. Functionally, involved in urease metallocenter assembly. Binds nickel. Probably functions as a nickel donor during metallocenter assembly. The polypeptide is Urease accessory protein UreE (Bradyrhizobium sp. (strain BTAi1 / ATCC BAA-1182)).